The primary structure comprises 579 residues: Zinc finger-containing ubiquitin peptidase 1 (579 aa).

The segment at 2-25 adopts a C2H2-type 1 zinc-finger fold; sequence LSCDICGETVSSEPDMKAHLLIVH. A C2H2-type 2; atypical zinc finger spans residues 30-53; sequence VICPFCKLSGVNYDEMCFHIETAH. 2 consecutive C2H2-type zinc fingers follow at residues 155–178 and 194–216; these read PECP…KTKH and YDCP…VDLH. Residues 227–249 form an MIU region; the sequence is NRVQCSRDLELAQQLQQEEDRKR. Residues 250-275 are zUBD/ZHA; sequence RSEESRQEMEEFQKLQRQYGLDNSGG. Lysine 263 bears the N6-acetyllysine mark. Catalysis depends on cysteine 361, which acts as the Nucleophile. Residue histidine 492 is the Proton acceptor of the active site. Residue aspartate 513 is part of the active site.

This sequence belongs to the peptidase C78 family. ZUFSP subfamily. As to quaternary structure, interacts with RPA1 and RPA2.

It is found in the cytoplasm. The protein resides in the nucleus. The enzyme catalyses Thiol-dependent hydrolysis of ester, thioester, amide, peptide and isopeptide bonds formed by the C-terminal Gly of ubiquitin (a 76-residue protein attached to proteins as an intracellular targeting signal).. Functionally, deubiquitinase with endodeubiquitinase activity that specifically interacts with and cleaves 'Lys-63'-linked long polyubiquitin chains. Shows only weak activity against 'Lys-11' and 'Lys-48'-linked chains. Plays an important role in genome stability pathways, functioning to prevent spontaneous DNA damage and also promote cellular survival in response to exogenous DNA damage. Modulates the ubiquitination status of replication protein A (RPA) complex proteins in response to replication stress. This is Zinc finger-containing ubiquitin peptidase 1 from Bos taurus (Bovine).